The chain runs to 116 residues: Protein Wnt-5(III) (116 aa).

Ser1 carries O-palmitoleoyl serine; by PORCN lipidation. Asn69 is a glycosylation site (N-linked (GlcNAc...) asparagine). Cys82 and Cys97 are joined by a disulfide.

It belongs to the Wnt family. Palmitoleoylation is required for efficient binding to frizzled receptors. Depalmitoleoylation leads to Wnt signaling pathway inhibition.

Its subcellular location is the secreted. It is found in the extracellular space. The protein resides in the extracellular matrix. In terms of biological role, ligand for members of the frizzled family of seven transmembrane receptors. Probable developmental protein. May be a signaling molecule which affects the development of discrete regions of tissues. Is likely to signal over only few cell diameters. The polypeptide is Protein Wnt-5(III) (WNT-5(III)) (Eptatretus stoutii (Pacific hagfish)).